The primary structure comprises 486 residues: Ribulose bisphosphate carboxylase large chain (486 aa).

The substrate site is built by Asn126 and Thr176. Lys178 serves as the catalytic Proton acceptor. Residue Lys180 coordinates substrate. Residues Lys204, Asp206, and Glu207 each contribute to the Mg(2+) site. Lys204 bears the N6-carboxylysine mark. His296 serves as the catalytic Proton acceptor. Positions 297, 329, and 381 each coordinate substrate.

This sequence belongs to the RuBisCO large chain family. Type I subfamily. As to quaternary structure, heterohexadecamer of 8 large chains and 8 small chains. Requires Mg(2+) as cofactor.

The enzyme catalyses 2 (2R)-3-phosphoglycerate + 2 H(+) = D-ribulose 1,5-bisphosphate + CO2 + H2O. It catalyses the reaction D-ribulose 1,5-bisphosphate + O2 = 2-phosphoglycolate + (2R)-3-phosphoglycerate + 2 H(+). RuBisCO catalyzes two reactions: the carboxylation of D-ribulose 1,5-bisphosphate, the primary event in carbon dioxide fixation, as well as the oxidative fragmentation of the pentose substrate. Both reactions occur simultaneously and in competition at the same active site. The polypeptide is Ribulose bisphosphate carboxylase large chain (Sinorhizobium medicae (strain WSM419) (Ensifer medicae)).